The following is a 336-amino-acid chain: Biotin synthase (336 aa).

In terms of domain architecture, Radical SAM core spans 52–279; it reads KAIQLSTLMS…KSYVRLSAGR (228 aa). Positions 67, 71, and 74 each coordinate [4Fe-4S] cluster. C111, C142, C202, and R274 together coordinate [2Fe-2S] cluster.

Belongs to the radical SAM superfamily. Biotin synthase family. As to quaternary structure, homodimer. The cofactor is [4Fe-4S] cluster. [2Fe-2S] cluster is required as a cofactor.

It catalyses the reaction (4R,5S)-dethiobiotin + (sulfur carrier)-SH + 2 reduced [2Fe-2S]-[ferredoxin] + 2 S-adenosyl-L-methionine = (sulfur carrier)-H + biotin + 2 5'-deoxyadenosine + 2 L-methionine + 2 oxidized [2Fe-2S]-[ferredoxin]. Its pathway is cofactor biosynthesis; biotin biosynthesis; biotin from 7,8-diaminononanoate: step 2/2. In terms of biological role, catalyzes the conversion of dethiobiotin (DTB) to biotin by the insertion of a sulfur atom into dethiobiotin via a radical-based mechanism. The sequence is that of Biotin synthase from Pasteurella multocida (strain Pm70).